Consider the following 439-residue polypeptide: MISALFLMNGKGEVLISRIYRDDISRGVANAFRLEVIGSQETRSPVKLIGSTSFMYIKVGNIYIVGVSRQNVNACMVFEVLHQLVDIFKSYFDNLDEDSIRNNFVLVYELLDEILDFGYPQNCSTDVLKLYITQGQGKLKSLDKLKQDKISKITIQATGTTPWRTPDIKYKRNELYIDVVESVNLLMSAEGNILRADVSGQVMMKCFLSGMPECKFGMNDKVIMDREKSTNGGSAARSGARRANGIEIDDITFHQCVRLGKFDSDRTVSFIPPDGEFELMRYRTTEHINLPFKVIPIVREMGRTRLECSVTVKSNFSSKMFGANVKVIIPTPKNTAVCKIVVAAGKAKYMPEQDAIIWRIRRFPGDTEFTLRAEVELMASVNLDKKAWSRPPISMEFQVTMFTASGFSVRFLKVVEKSNYTPIKWVRYLTKAGTYQNRI.

The region spanning 172–438 is the MHD domain; that stretch reads RNELYIDVVE…LTKAGTYQNR (267 aa).

It belongs to the adaptor complexes medium subunit family. Adaptor protein complex 2 (AP-2) is a heterotetramer composed of two large adaptins (alpha-type and beta-type subunits), a medium adaptin (mu-type subunit AP50) and a small adaptin (sigma-type subunit AP17). In terms of processing, phosphorylated.

Its subcellular location is the cell membrane. The protein resides in the membrane. It localises to the coated pit. Its function is as follows. Component of the adaptor complexes which link clathrin to receptors in coated vesicles. Clathrin-associated protein complexes are believed to interact with the cytoplasmic tails of membrane proteins, leading to their selection and concentration. AP50 is a subunit of the plasma membrane adaptor. The chain is AP-2 complex subunit mu (apm2) from Dictyostelium discoideum (Social amoeba).